We begin with the raw amino-acid sequence, 89 residues long: MALSAAEKAGIVAKYQKVAGDTGSPEVQVALLTANINKLQNHFVAHKADHHSRRGLIRMVNSRRKLLDYLKDKDAPRYSALIQDLGLRR.

The protein belongs to the universal ribosomal protein uS15 family. As to quaternary structure, part of the 30S ribosomal subunit. Forms a bridge to the 50S subunit in the 70S ribosome, contacting the 23S rRNA.

Its function is as follows. One of the primary rRNA binding proteins, it binds directly to 16S rRNA where it helps nucleate assembly of the platform of the 30S subunit by binding and bridging several RNA helices of the 16S rRNA. Functionally, forms an intersubunit bridge (bridge B4) with the 23S rRNA of the 50S subunit in the ribosome. The polypeptide is Small ribosomal subunit protein uS15 (Cellvibrio japonicus (strain Ueda107) (Pseudomonas fluorescens subsp. cellulosa)).